A 1432-amino-acid polypeptide reads, in one-letter code: Probable ATP-dependent RNA helicase spindle-E (1432 aa).

A Helicase ATP-binding domain is found at methionine 125–valine 292. Glycine 138–threonine 145 is a binding site for ATP. The DEAH box signature appears at aspartate 238–histidine 241. The 184-residue stretch at valine 342–asparagine 525 folds into the Helicase C-terminal domain. The Tudor domain occupies alanine 936–glutamate 999.

It belongs to the DEAD box helicase family. DEAH subfamily.

It localises to the cytoplasm. The enzyme catalyses ATP + H2O = ADP + phosphate + H(+). Its function is as follows. Probable ATP-binding RNA helicase which plays a central role during spermatogenesis and oogenesis by repressing transposable elements and preventing their mobilization, which is essential for the germline integrity. Acts via the piRNA metabolic process, which mediates the repression of transposable elements during meiosis by forming complexes composed of piRNAs and Piwi and govern the methylation and subsequent repression of transposons. Involved in the repression of LTR retrotransposon copia. Also involved in telomere regulation by repressing specialized telomeric retroelements HeT-A, TAHRE, and TART; Drosophila telomeres being maintained by transposition of specialized telomeric retroelements. Involved in telomeric trans-silencing, a repression mechanism by which a transposon or a transgene inserted in subtelomeric heterochromatin has the capacity to repress in trans in the female germline, a homologous transposon, or transgene located in euchromatin. Involved in the repression of testis-expressed Stellate genes by the homologous Su(Ste) repeats. Required for anteroposterior and dorsoventral axis formation during oogenesis. The chain is Probable ATP-dependent RNA helicase spindle-E (spn-E) from Drosophila willistoni (Fruit fly).